A 69-amino-acid polypeptide reads, in one-letter code: Large ribosomal subunit protein bL31 (69 aa).

Residues cysteine 16, cysteine 18, cysteine 36, and cysteine 39 each coordinate Zn(2+).

It belongs to the bacterial ribosomal protein bL31 family. Type A subfamily. In terms of assembly, part of the 50S ribosomal subunit. Zn(2+) serves as cofactor.

Functionally, binds the 23S rRNA. The protein is Large ribosomal subunit protein bL31 of Kosmotoga olearia (strain ATCC BAA-1733 / DSM 21960 / TBF 19.5.1).